Consider the following 513-residue polypeptide: Coniferin beta-glucosidase (513 aa).

The N-terminal stretch at 1 to 23 (MEVSVLMWVLLFYSLLGFQVTTA) is a signal peptide. A beta-D-glucoside is bound by residues Gln-44, His-145, and 190–191 (NE). The active-site Proton donor is Glu-191. A disulfide bond links Cys-210 and Cys-219. An N-linked (GlcNAc...) asparagine glycan is attached at Asn-223. Residues Tyr-336 and Glu-408 each coordinate a beta-D-glucoside. The active-site Nucleophile is Glu-408. Residue Asn-447 is glycosylated (N-linked (GlcNAc...) asparagine). A beta-D-glucoside contacts are provided by residues Trp-457, 464 to 465 (EW), and Phe-473.

It belongs to the glycosyl hydrolase 1 family. In terms of assembly, homodimer. Glycosylated.

The catalysed reaction is 4-O-(beta-D-glucosyl)-(E)-coniferol + H2O = (E)-coniferol + D-glucose. Its activity is regulated as follows. Inhibited by glucono-1,5-lactone, but not by bromoconduritol or conduritol B epoxide. In terms of biological role, involved in the release of monolignols for lignin biosynthesis. Unable to hydrolyze 4-nitrophenyl beta-cellobioside or alpha-linked methylumbelliferyl glucoside. The chain is Coniferin beta-glucosidase from Pinus contorta (Shore pine).